Here is a 154-residue protein sequence, read N- to C-terminus: MADVKKNCLASLSLAPISKAQQAQVGKDFYKFFFTNHPDLRKYFKGAENFTADDVQKSDRFEKLGSGLLLSVHILANTFDNEDVFRAFCRETIDRHVGRGLDPALWKAFWSVWVAFLESKGGVSGDQKAAWDKLGTVFNDECQHQLAKHGLPHL.

One can recognise a Globin domain in the interval methionine 1–alanine 147. Histidine 96 is a heme b binding site.

The protein belongs to the globin family.

It is found in the cytoplasm. The chain is Myoglobin (GLBB) from Nippostrongylus brasiliensis (Rat hookworm).